We begin with the raw amino-acid sequence, 215 residues long: Small ribosomal subunit protein uS3 (215 aa).

In terms of domain architecture, KH type-2 spans 39–107 (VRQYLQKRLA…PVHINIEEIR (69 aa)).

This sequence belongs to the universal ribosomal protein uS3 family. Part of the 30S ribosomal subunit. Forms a tight complex with proteins S10 and S14.

Its function is as follows. Binds the lower part of the 30S subunit head. Binds mRNA in the 70S ribosome, positioning it for translation. This chain is Small ribosomal subunit protein uS3, found in Nitrosomonas eutropha (strain DSM 101675 / C91 / Nm57).